A 513-amino-acid chain; its full sequence is ATP synthase subunit alpha (513 aa).

169–176 (GDRQTGKT) provides a ligand contact to ATP.

The protein belongs to the ATPase alpha/beta chains family. F-type ATPases have 2 components, CF(1) - the catalytic core - and CF(0) - the membrane proton channel. CF(1) has five subunits: alpha(3), beta(3), gamma(1), delta(1), epsilon(1). CF(0) has three main subunits: a(1), b(2) and c(9-12). The alpha and beta chains form an alternating ring which encloses part of the gamma chain. CF(1) is attached to CF(0) by a central stalk formed by the gamma and epsilon chains, while a peripheral stalk is formed by the delta and b chains.

The protein resides in the cell inner membrane. It carries out the reaction ATP + H2O + 4 H(+)(in) = ADP + phosphate + 5 H(+)(out). Functionally, produces ATP from ADP in the presence of a proton gradient across the membrane. The alpha chain is a regulatory subunit. The chain is ATP synthase subunit alpha from Vibrio cholerae serotype O1 (strain ATCC 39541 / Classical Ogawa 395 / O395).